The following is a 143-amino-acid chain: Large ribosomal subunit protein uL11 (143 aa).

It belongs to the universal ribosomal protein uL11 family. Part of the ribosomal stalk of the 50S ribosomal subunit. Interacts with L10 and the large rRNA to form the base of the stalk. L10 forms an elongated spine to which L12 dimers bind in a sequential fashion forming a multimeric L10(L12)X complex. One or more lysine residues are methylated.

Forms part of the ribosomal stalk which helps the ribosome interact with GTP-bound translation factors. This chain is Large ribosomal subunit protein uL11, found in Thioalkalivibrio sulfidiphilus (strain HL-EbGR7).